The sequence spans 199 residues: Urease accessory protein UreG (199 aa).

A GTP-binding site is contributed by 8 to 15 (GPVGSGKT).

This sequence belongs to the SIMIBI class G3E GTPase family. UreG subfamily. Homodimer. UreH, UreF and UreG form a complex that acts as a GTP-hydrolysis-dependent molecular chaperone, activating the urease apoprotein by helping to assemble the nickel containing metallocenter of UreC. The UreE protein probably delivers the nickel.

The protein localises to the cytoplasm. Its function is as follows. Facilitates the functional incorporation of the urease nickel metallocenter. This process requires GTP hydrolysis, probably effectuated by UreG. This is Urease accessory protein UreG from Helicobacter acinonychis (strain Sheeba).